The chain runs to 555 residues: AP2-like ethylene-responsive transcription factor ANT (555 aa).

Disordered stretches follow at residues 34-56 (GGRE…SVPP) and 199-231 (LSMS…NHQQ). 3 stretches are compositionally biased toward low complexity: residues 41–53 (SSST…SSSS), 199–208 (LSMSPGSQSS), and 218–231 (QNQN…NHQQ). DNA-binding regions (AP2/ERF) lie at residues 283–349 (QYRG…TNFS) and 385–443 (IYRG…TNFD).

This sequence belongs to the AP2/ERF transcription factor family. AP2 subfamily. Interacts with ANL2, HDG2 and HDG10, and possibly with GL2, HDG3, HDG8, ATML1 and PDF2. In terms of tissue distribution, mostly expressed in developing flowers. Also present in mature flowers, siliques and seedlings, but not in mature roots, leaves and stems. Expressed in ovules and in vegetative and floral primordia.

The protein localises to the nucleus. In terms of biological role, transcription activator that recognizes and binds to the DNA consensus sequence 5'-CAC[AG]N[AT]TNCCNANG-3'. Required for the initiation and growth of ovules integumenta, and for the development of female gametophyte. Plays a critical role in the development of gynoecium marginal tissues (e.g. stigma, style and septa), and in the fusion of carpels and of medial ridges leading to ovule primordia. Also involved in organs initiation and development, including floral organs. Maintains the meristematic competence of cells and consequently sustains expression of cell cycle regulators during organogenesis, thus controlling the final size of each organ by controlling their cell number. Regulates INO autoinduction and expression pattern. As ANT promotes petal cell identity and mediates down-regulation of AG in flower whorl 2, it functions as a class A homeotic gene. This is AP2-like ethylene-responsive transcription factor ANT from Arabidopsis thaliana (Mouse-ear cress).